Reading from the N-terminus, the 518-residue chain is Gypsy retrotransposon integrase-like protein 1 (518 aa).

In terms of domain architecture, Integrase catalytic spans 130-292 (QQHLPMVGNP…TPYFQMFNRN (163 aa)). Residue Ser-498 is modified to Phosphoserine.

This Mus musculus (Mouse) protein is Gypsy retrotransposon integrase-like protein 1 (Gin1).